The sequence spans 262 residues: Pyridoxine 5'-phosphate synthase (262 aa).

Position 6 (N6) interacts with 3-amino-2-oxopropyl phosphate. A 1-deoxy-D-xylulose 5-phosphate-binding site is contributed by 8–9 (DH). 3-amino-2-oxopropyl phosphate is bound at residue R17. The active-site Proton acceptor is H43. The 1-deoxy-D-xylulose 5-phosphate site is built by R45 and H50. E70 (proton acceptor) is an active-site residue. A 1-deoxy-D-xylulose 5-phosphate-binding site is contributed by T102. The Proton donor role is filled by H215. 3-amino-2-oxopropyl phosphate is bound by residues G216 and 237–238 (GH).

The protein belongs to the PNP synthase family. Homooctamer; tetramer of dimers.

The protein resides in the cytoplasm. The catalysed reaction is 3-amino-2-oxopropyl phosphate + 1-deoxy-D-xylulose 5-phosphate = pyridoxine 5'-phosphate + phosphate + 2 H2O + H(+). Its pathway is cofactor biosynthesis; pyridoxine 5'-phosphate biosynthesis; pyridoxine 5'-phosphate from D-erythrose 4-phosphate: step 5/5. Its function is as follows. Catalyzes the complicated ring closure reaction between the two acyclic compounds 1-deoxy-D-xylulose-5-phosphate (DXP) and 3-amino-2-oxopropyl phosphate (1-amino-acetone-3-phosphate or AAP) to form pyridoxine 5'-phosphate (PNP) and inorganic phosphate. The protein is Pyridoxine 5'-phosphate synthase of Helicobacter pylori (strain Shi470).